The primary structure comprises 463 residues: L-seryl-tRNA(Sec) selenium transferase (463 aa).

The residue at position 295 (lysine 295) is an N6-(pyridoxal phosphate)lysine.

It belongs to the SelA family. As to quaternary structure, homodecamer; pentamer of dimers. Binds only one seryl-tRNA(Sec) per dimer. Pyridoxal 5'-phosphate is required as a cofactor.

The protein resides in the cytoplasm. The enzyme catalyses L-seryl-tRNA(Sec) + selenophosphate + H(+) = L-selenocysteinyl-tRNA(Sec) + phosphate. It participates in aminoacyl-tRNA biosynthesis; selenocysteinyl-tRNA(Sec) biosynthesis; selenocysteinyl-tRNA(Sec) from L-seryl-tRNA(Sec) (bacterial route): step 1/1. In terms of biological role, converts seryl-tRNA(Sec) to selenocysteinyl-tRNA(Sec) required for selenoprotein biosynthesis. The protein is L-seryl-tRNA(Sec) selenium transferase of Proteus mirabilis (strain HI4320).